A 330-amino-acid polypeptide reads, in one-letter code: Inactive serine protease 45 (330 aa).

The first 35 residues, 1–35 (MATSLRLLDAGPGSLRRWIPTCFAALLLLPPRPNL), serve as a signal peptide directing secretion. The Peptidase S1 domain maps to 45-291 (VCGAPWWSDS…YTGWIKEQVS (247 aa)). Intrachain disulfides connect cysteine 75–cysteine 91, cysteine 172–cysteine 249, cysteine 207–cysteine 230, and cysteine 239–cysteine 267. A glycan (N-linked (GlcNAc...) asparagine) is linked at asparagine 272.

Belongs to the peptidase S1 family.

The protein localises to the secreted. This Rattus norvegicus (Rat) protein is Inactive serine protease 45 (Prss45).